Consider the following 176-residue polypeptide: Mediator of RNA polymerase II transcription subunit 11 (176 aa).

Positions 98-176 (SRVRELEETK…MGGDSSMSTN (79 aa)) are disordered. Positions 99-108 (RVRELEETKA) are enriched in basic and acidic residues. A compositionally biased stretch (low complexity) spans 124-154 (HAAAQQQQQQQQQQQQQQQQMQQAAQQQQQQ).

The protein belongs to the Mediator complex subunit 11 family. In terms of assembly, component of the Mediator complex, which may include CDK8, MED4, MED6, MED11, MED14, MED17, MED18, MED20, MED21, MED22, MED27, MED28, MED30 and MED31.

The protein resides in the nucleus. Component of the Mediator complex, a coactivator involved in the regulated transcription of nearly all RNA polymerase II-dependent genes. Mediator functions as a bridge to convey information from gene-specific regulatory proteins to the basal RNA polymerase II transcription machinery. Mediator is recruited to promoters by direct interactions with regulatory proteins and serves as a scaffold for the assembly of a functional pre-initiation complex with RNA polymerase II and the general transcription factors. The chain is Mediator of RNA polymerase II transcription subunit 11 (MED11) from Drosophila melanogaster (Fruit fly).